A 392-amino-acid chain; its full sequence is Histidinol-phosphate aminotransferase (392 aa).

The disordered stretch occupies residues 1–24 (MSAVLKDPIPAPGRPESTRPEPRP). Position 236 is an N6-(pyridoxal phosphate)lysine (lysine 236).

This sequence belongs to the class-II pyridoxal-phosphate-dependent aminotransferase family. Histidinol-phosphate aminotransferase subfamily. Homodimer. Pyridoxal 5'-phosphate is required as a cofactor.

It catalyses the reaction L-histidinol phosphate + 2-oxoglutarate = 3-(imidazol-4-yl)-2-oxopropyl phosphate + L-glutamate. The protein operates within amino-acid biosynthesis; L-histidine biosynthesis; L-histidine from 5-phospho-alpha-D-ribose 1-diphosphate: step 7/9. The sequence is that of Histidinol-phosphate aminotransferase from Xanthobacter autotrophicus (strain ATCC BAA-1158 / Py2).